The primary structure comprises 74 residues: High-potential iron-sulfur protein (74 aa).

Cys-36, Cys-39, Cys-53, and Cys-67 together coordinate [4Fe-4S] cluster.

The protein belongs to the high-potential iron-sulfur protein (HiPIP) family. Homodimer.

Its function is as follows. Specific class of high-redox-potential 4Fe-4S ferredoxins. Functions in anaerobic electron transport in most purple and in some other photosynthetic bacteria and in at least one genus (Paracoccus) of halophilic, denitrifying bacteria. This Rubrivivax gelatinosus (Rhodocyclus gelatinosus) protein is High-potential iron-sulfur protein (hip).